Here is an 840-residue protein sequence, read N- to C-terminus: V-type proton ATPase 116 kDa subunit a 4 (840 aa).

Topologically, residues 1-390 (MVSVFRSEEM…DAYGVGSYRE (390 aa)) are cytoplasmic. Residues 391-409 (INPAPYTIITFPFLFAVMF) traverse the membrane as a helical segment. Residues 410–411 (GD) are Vacuolar-facing. A helical transmembrane segment spans residues 412 to 428 (CGHGTVMLLAALWMILN). Topologically, residues 429–443 (ERRLLSQKTDNEIWN) are cytoplasmic. A helical membrane pass occupies residues 444–473 (TFFHGRYLILLMGIFSIYTGLIYNDCFSKS). Residues 474-538 (LNIFGSSWSV…ASNKLTFLNS (65 aa)) lie on the Vacuolar side of the membrane. Residues 539-558 (YKMKMSVILGIVQMVFGVIL) traverse the membrane as a helical segment. Over 559–576 (SLFNHIYFRRTLNIILQF) the chain is Cytoplasmic. The helical transmembrane segment at 577 to 597 (IPEMIFILCLFGYLVFMIIFK) threads the bilayer. Over 598-642 (WCCFDVHVSQHAPSILIHFINMFLFNYSDSSNAPLYKHQQEVQSF) the chain is Vacuolar. The helical transmembrane segment at 643–662 (FVVMALISVPWMLLIKPFIL) threads the bilayer. At 663 to 727 (RASHRKSQLQ…DVFVHQAIHT (65 aa)) the chain is on the cytoplasmic side. A disordered region spans residues 675 to 704 (RIQEDATENIEGDSSSPSSRSGQRTSADTH). The chain crosses the membrane as a helical span at residues 728-752 (IEYCLGCISNTASYLRLWALSLAHA). The Vacuolar segment spans residues 753–773 (QLSEVLWTMVMNSGLQTRGWG). Residues 774-812 (GIVGVFIIFAVFAVLTVAILLIMEGLSAFLHALRLHWVE) traverse the membrane as a helical segment. Residues 813-840 (FQNKFYVGDGYKFSPFSFKHILDGTAEE) are Cytoplasmic-facing.

The protein belongs to the V-ATPase 116 kDa subunit family. V-ATPase is a heteromultimeric enzyme made up of two complexes: the ATP-hydrolytic V1 complex and the proton translocation V0 complex. The V1 complex consists of three catalytic AB heterodimers that form a heterohexamer, three peripheral stalks each consisting of EG heterodimers, one central rotor including subunits D and F, and the regulatory subunits C and H. The proton translocation complex V0 consists of the proton transport subunit a, a ring of proteolipid subunits c9c'', rotary subunit d, subunits e and f, and the accessory subunits ATP6AP1/Ac45 and ATP6AP2/PRR. Interacts with the V1 complex V-ATPase subunit A ATP6V1A. Interacts with the V0 complex V-ATPase subunit c ATP6V0C. Expressed in adult and fetal kidney. Found in the inner ear.

It is found in the apical cell membrane. It localises to the basolateral cell membrane. In terms of biological role, subunit of the V0 complex of vacuolar(H+)-ATPase (V-ATPase), a multisubunit enzyme composed of a peripheral complex (V1) that hydrolyzes ATP and a membrane integral complex (V0) that translocates protons. V-ATPase is responsible for acidifying and maintaining the pH of intracellular compartments and in some cell types, is targeted to the plasma membrane, where it is responsible for acidifying the extracellular environment. Involved in normal vectorial acid transport into the urine by the kidney. This chain is V-type proton ATPase 116 kDa subunit a 4 (ATP6V0A4), found in Homo sapiens (Human).